Here is a 142-residue protein sequence, read N- to C-terminus: Histone H2B (142 aa).

Basic and acidic residues predominate over residues 1–10 (MPPKPAEKKP). The disordered stretch occupies residues 1–50 (MPPKPAEKKPSSTAGKAPASSAGKAPAEAAKKTSKAPAKSGEKKKATKVR). 2 positions are modified to N6-acetyllysine; alternate: K8 and K9. Glycyl lysine isopeptide (Lys-Gly) (interchain with G-Cter in SUMO); alternate cross-links involve residues K8 and K9. Low complexity predominate over residues 11-28 (SSTAGKAPASSAGKAPAE). The residue at position 24 (K24) is an N6-acetyllysine. Over residues 40–50 (SGEKKKATKVR) the composition is skewed to basic and acidic residues. K137 participates in a covalent cross-link: Glycyl lysine isopeptide (Lys-Gly) (interchain with G-Cter in ubiquitin).

This sequence belongs to the histone H2B family. As to quaternary structure, the nucleosome is a histone octamer containing two molecules each of H2A, H2B, H3 and H4 assembled in one H3-H4 heterotetramer and two H2A-H2B heterodimers. The octamer wraps approximately 147 bp of DNA. Post-translationally, monoubiquitinated by the UBC2-BRE1 complex to form H2BK123ub1. H2BK123ub1 gives a specific tag for epigenetic transcriptional activation and is also prerequisite for H3K4me and H3K79me formation. H2BK123ub1 also modulates the formation of double-strand breaks during meiosis and is a prerequisite for DNA-damage checkpoint activation. In terms of processing, acetylation of N-terminal lysines and particularly formation of H2BK11ac has a positive effect on transcription. Sumoylation to form H2BK6su or H2BK7su occurs preferentially near the telomeres and represses gene transcription.

The protein resides in the nucleus. It localises to the chromosome. Core component of nucleosome. Nucleosomes wrap and compact DNA into chromatin, limiting DNA accessibility to the cellular machineries which require DNA as a template. Histones thereby play a central role in transcription regulation, DNA repair, DNA replication and chromosomal stability. DNA accessibility is regulated via a complex set of post-translational modifications of histones, also called histone code, and nucleosome remodeling. In Mycosarcoma maydis (Corn smut fungus), this protein is Histone H2B (HTB1).